We begin with the raw amino-acid sequence, 225 residues long: Heptaprenylglyceryl phosphate synthase (225 aa).

Position 6 (K6) interacts with sn-glycerol 1-phosphate. Positions 8 and 34 each coordinate Mg(2+). Sn-glycerol 1-phosphate-binding positions include 153–158, G183, and 203–204; these read YIEYSG and GN.

Belongs to the GGGP/HepGP synthase family. Group I subfamily. In terms of assembly, homodimer. Requires Mg(2+) as cofactor.

It carries out the reaction sn-glycerol 1-phosphate + all-trans-heptaprenyl diphosphate = 3-heptaprenyl-sn-glycero-1-phosphate + diphosphate. It functions in the pathway membrane lipid metabolism; glycerophospholipid metabolism. Functionally, prenyltransferase that catalyzes in vivo the transfer of the heptaprenyl moiety of heptaprenyl pyrophosphate (HepPP; 35 carbon atoms) to the C3 hydroxyl of sn-glycerol-1-phosphate (G1P), producing heptaprenylglyceryl phosphate (HepGP). This reaction is an ether-bond-formation step in the biosynthesis of archaea-type G1P-based membrane lipids found in Bacillales. This chain is Heptaprenylglyceryl phosphate synthase, found in Listeria welshimeri serovar 6b (strain ATCC 35897 / DSM 20650 / CCUG 15529 / CIP 8149 / NCTC 11857 / SLCC 5334 / V8).